The primary structure comprises 126 residues: MARIAGVEIPRNKRVDVALTYIYGIGKARAKEALEKTGINPATRVKDLTEAEVVRLREYVENTWKLEGELRAEVAANIKRLMDIGCYRGLRHRRGLPVRGQRTRTNARTRKGPRKTVAGKKKAPRK.

The tract at residues Gly95–Lys126 is disordered.

This sequence belongs to the universal ribosomal protein uS13 family. As to quaternary structure, part of the 30S ribosomal subunit. Forms a loose heterodimer with protein S19. Forms two bridges to the 50S subunit in the 70S ribosome.

Functionally, located at the top of the head of the 30S subunit, it contacts several helices of the 16S rRNA. In the 70S ribosome it contacts the 23S rRNA (bridge B1a) and protein L5 of the 50S subunit (bridge B1b), connecting the 2 subunits; these bridges are implicated in subunit movement. Contacts the tRNAs in the A and P-sites. The chain is Small ribosomal subunit protein uS13 (rpsM) from Thermus thermophilus (strain ATCC BAA-163 / DSM 7039 / HB27).